The primary structure comprises 157 residues: Endoribonuclease YbeY (157 aa).

Positions 114, 118, and 124 each coordinate Zn(2+).

This sequence belongs to the endoribonuclease YbeY family. Zn(2+) serves as cofactor.

It is found in the cytoplasm. In terms of biological role, single strand-specific metallo-endoribonuclease involved in late-stage 70S ribosome quality control and in maturation of the 3' terminus of the 16S rRNA. The protein is Endoribonuclease YbeY of Yersinia pseudotuberculosis serotype O:3 (strain YPIII).